Reading from the N-terminus, the 153-residue chain is Transcriptional repressor NrdR (153 aa).

Residues 3 to 34 (CPSCSHNGTRVLDSRPVDEGRSIRRRRECESC) fold into a zinc finger. In terms of domain architecture, ATP-cone spans 49–139 (LIVVKKEGTR…VYRQFKDLNV (91 aa)).

Belongs to the NrdR family. It depends on Zn(2+) as a cofactor.

Functionally, negatively regulates transcription of bacterial ribonucleotide reductase nrd genes and operons by binding to NrdR-boxes. The protein is Transcriptional repressor NrdR of Bacillus anthracis (strain A0248).